The chain runs to 210 residues: Thymidylate kinase (210 aa).

11–18 (GVDGAGKT) lines the ATP pocket.

The protein belongs to the thymidylate kinase family.

It carries out the reaction dTMP + ATP = dTDP + ADP. Its function is as follows. Phosphorylation of dTMP to form dTDP in both de novo and salvage pathways of dTTP synthesis. This Mycoplasma pneumoniae (strain ATCC 29342 / M129 / Subtype 1) (Mycoplasmoides pneumoniae) protein is Thymidylate kinase (tmk).